The sequence spans 205 residues: Small ribosomal subunit protein uS4 (205 aa).

Over residues 1 to 16 (MSKRESSKYKIDRRMG) the composition is skewed to basic and acidic residues. Residues 1–46 (MSKRESSKYKIDRRMGENIWGRPKSPVNRREYGPGQHGQRRKGKLS) form a disordered region. The S4 RNA-binding domain occupies 94-157 (SRLDAIVYRA…KQLVTVLEAV (64 aa)).

It belongs to the universal ribosomal protein uS4 family. In terms of assembly, part of the 30S ribosomal subunit. Contacts protein S5. The interaction surface between S4 and S5 is involved in control of translational fidelity.

Its function is as follows. One of the primary rRNA binding proteins, it binds directly to 16S rRNA where it nucleates assembly of the body of the 30S subunit. In terms of biological role, with S5 and S12 plays an important role in translational accuracy. The chain is Small ribosomal subunit protein uS4 from Rhizobium etli (strain ATCC 51251 / DSM 11541 / JCM 21823 / NBRC 15573 / CFN 42).